The primary structure comprises 133 residues: Bacteriohemerythrin (133 aa).

Residues His-19, His-56, Glu-60, His-75, His-79, His-115, and Asp-120 each coordinate Fe cation.

Belongs to the hemerythrin family. As to quaternary structure, monomer.

In terms of biological role, oxygen-binding protein. May be involved in a storage mechanism or for delivery to oxygen-requiring enzymes. The oxygen-binding site contains two iron atoms. The sequence is that of Bacteriohemerythrin from Campylobacter jejuni subsp. jejuni serotype O:6 (strain 81116 / NCTC 11828).